The primary structure comprises 88 residues: MLKLICIAFLVTVLTLVAGEDSLDPAEYGCADDINQEDLLKKNDVCLQCEDLHKEGVVFSLCKTNCFTTQYFTNCVKDLEEAEKEPPE.

Positions methionine 1–glycine 19 are cleaved as a signal peptide. 3 disulfide bridges follow: cysteine 30/cysteine 66, cysteine 46/cysteine 62, and cysteine 49/cysteine 75.

This sequence belongs to the arthropod CHH/MIH/GIH/VIH hormone family. As to expression, expressed by the venom gland.

It is found in the secreted. May increase the toxicity of alpha-latrotoxin and/or other venom components. Is non-toxic to mice and to the cockroach Periplaneta americana. This chain is Alpha-latrotoxin associated low molecular weight protein 2, found in Latrodectus hesperus (Western black widow spider).